Reading from the N-terminus, the 611-residue chain is tRNA uridine 5-carboxymethylaminomethyl modification enzyme MnmG (611 aa).

An FAD-binding site is contributed by 14–19 (GAGHAG). 274-288 (GPRYCPSIEDKIVKF) contacts NAD(+).

Belongs to the MnmG family. As to quaternary structure, homodimer. Heterotetramer of two MnmE and two MnmG subunits. It depends on FAD as a cofactor.

It is found in the cytoplasm. Functionally, NAD-binding protein involved in the addition of a carboxymethylaminomethyl (cmnm) group at the wobble position (U34) of certain tRNAs, forming tRNA-cmnm(5)s(2)U34. This Chlamydia felis (strain Fe/C-56) (Chlamydophila felis) protein is tRNA uridine 5-carboxymethylaminomethyl modification enzyme MnmG.